Reading from the N-terminus, the 149-residue chain is D-aminoacyl-tRNA deacylase (149 aa).

The short motif at 137–138 (GP) is the Gly-cisPro motif, important for rejection of L-amino acids element.

This sequence belongs to the DTD family. In terms of assembly, homodimer.

Its subcellular location is the cytoplasm. It carries out the reaction glycyl-tRNA(Ala) + H2O = tRNA(Ala) + glycine + H(+). The catalysed reaction is a D-aminoacyl-tRNA + H2O = a tRNA + a D-alpha-amino acid + H(+). An aminoacyl-tRNA editing enzyme that deacylates mischarged D-aminoacyl-tRNAs. Also deacylates mischarged glycyl-tRNA(Ala), protecting cells against glycine mischarging by AlaRS. Acts via tRNA-based rather than protein-based catalysis; rejects L-amino acids rather than detecting D-amino acids in the active site. By recycling D-aminoacyl-tRNA to D-amino acids and free tRNA molecules, this enzyme counteracts the toxicity associated with the formation of D-aminoacyl-tRNA entities in vivo and helps enforce protein L-homochirality. The sequence is that of D-aminoacyl-tRNA deacylase from Halothermothrix orenii (strain H 168 / OCM 544 / DSM 9562).